Reading from the N-terminus, the 2179-residue chain is Probable inactive serine/threonine-protein kinase lvsG (2179 aa).

Residues 100-167 (DHDLNKNKNN…TSISLNDLNS (68 aa)) form a disordered region. 2 stretches are compositionally biased toward low complexity: residues 106–121 (NKNN…NNSG) and 141–159 (LSPS…LSTS). One copy of the WD 1 repeat lies at 216 to 256 (LYERSLKTSQQQQQQQQQQFKFQPNETLSLWEYFDEINSPP). 9 disordered regions span residues 281 to 300 (LDNK…NSQS), 523 to 556 (DNDN…TVGW), 589 to 621 (DSMG…NSGK), 778 to 801 (KSLK…QPQF), 844 to 959 (NNHH…NKPS), 1033 to 1055 (AQQQ…SKQL), 1079 to 1153 (GISK…STTD), 1339 to 1362 (NHSN…KNGS), and 1785 to 1807 (TTTT…PNSL). The BEACH domain occupies 463–801 (YHQPLENQFE…QQQTQQQPQF (339 aa)). Over residues 534-548 (NSSSSNNNNNNNNED) the composition is skewed to low complexity. Positions 590 to 602 (SMGGGIGSIGSTG) are enriched in gly residues. 4 stretches are compositionally biased toward low complexity: residues 783–800 (QRQQ…QQPQ), 853–943 (NSNI…GVNN), 1033–1047 (AQQQ…QQQA), and 1084–1098 (TTNA…TNSN). A coiled-coil region spans residues 1021–1049 (LQQQLQQQQQQQAQQQQSQQQSQQQQANS). The Protein kinase domain occupies 1064–1400 (ESMIKKYSNG…VNELLSSSLF (337 aa)). A compositionally biased stretch (polar residues) spans 1099–1122 (MGDSIGNNITSPPSPTSLKDSSSI). The span at 1123–1134 (QQQQQQQQQQQQ) shows a compositional bias: low complexity. The span at 1135–1153 (NSESTRPITPPNVSNSTTD) shows a compositional bias: polar residues. Composition is skewed to low complexity over residues 1339–1360 (NHSN…NNKN) and 1785–1801 (TTTT…NNNN). 6 WD repeats span residues 1864–1903 (EHNA…SLTT), 1906–1942 (QHMH…KVNV), 1945–1983 (EPTG…LTHE), 2007–2048 (SNSN…ILEQ), 2052–2089 (HHDS…PIIS), and 2149–2179 (PKQS…KICQ).

It belongs to the protein kinase superfamily. Ser/Thr protein kinase family.

In Dictyostelium discoideum (Social amoeba), this protein is Probable inactive serine/threonine-protein kinase lvsG (lvsG).